The chain runs to 366 residues: MIRTEEMLLNVGPQHPSTHGVFRLVIKIDGEIIKEATPVIGYLHRGTEKIAESLQYTQIIPYTDRMDYLSAMTNNYVICHAVETMMGLEIPERAEYLRVLAMELGRIASHLVWWGTNLLDIGAVSPFLYAFREREMIINLLNELCGARLTFNYMRVGGVKWDAPDGWIEKVEEFVPYMREQLAGYHDLVSGNEIFLNRVKGVGIYSAEEAISYSLSGANLRCTGVNWDLRKDEPYSIYDRFDFDIPVGSVGDAWDRYVCRMQEIEESLKIVEQAVQQFPKDGAVLAKVPKIIKAPKGEAFVRIESPRGEIGCYIASDGKKEPYRLKFRRPSFYNLQILPKLLKGENIANLITILGGVDIVLGEVDG.

It belongs to the complex I 49 kDa subunit family. In terms of assembly, NDH-1 is composed of 14 different subunits. Subunits NuoB, C, D, E, F, and G constitute the peripheral sector of the complex.

It is found in the cell membrane. It catalyses the reaction a quinone + NADH + 5 H(+)(in) = a quinol + NAD(+) + 4 H(+)(out). Its function is as follows. NDH-1 shuttles electrons from NADH, via FMN and iron-sulfur (Fe-S) centers, to quinones in the respiratory chain. The immediate electron acceptor for the enzyme in this species is believed to be a menaquinone. Couples the redox reaction to proton translocation (for every two electrons transferred, four hydrogen ions are translocated across the cytoplasmic membrane), and thus conserves the redox energy in a proton gradient. The chain is NADH-quinone oxidoreductase subunit D from Bacillus cereus (strain ATCC 14579 / DSM 31 / CCUG 7414 / JCM 2152 / NBRC 15305 / NCIMB 9373 / NCTC 2599 / NRRL B-3711).